The primary structure comprises 184 residues: Putative rRNA methyltransferase YlbH (184 aa).

The segment at 1–22 is disordered; sequence MRVISGSKKGRSLKAVAGTSTR.

Belongs to the methyltransferase superfamily. RsmD family.

Functionally, may catalyze the S-adenosyl-L-methionine-dependent methylation of a specific base in rRNA. The protein is Putative rRNA methyltransferase YlbH (ylbH) of Bacillus subtilis (strain 168).